The sequence spans 162 residues: NADH-quinone oxidoreductase subunit I 1 (162 aa).

4Fe-4S ferredoxin-type domains are found at residues Leu-44 to Ala-74 and Tyr-90 to Glu-119. Cys-54, Cys-57, Cys-60, Cys-64, Cys-99, Cys-102, Cys-105, and Cys-109 together coordinate [4Fe-4S] cluster.

The protein belongs to the complex I 23 kDa subunit family. In terms of assembly, NDH-1 is composed of 14 different subunits. Subunits NuoA, H, J, K, L, M, N constitute the membrane sector of the complex. It depends on [4Fe-4S] cluster as a cofactor.

The protein resides in the cell membrane. It catalyses the reaction a quinone + NADH + 5 H(+)(in) = a quinol + NAD(+) + 4 H(+)(out). Functionally, NDH-1 shuttles electrons from NADH, via FMN and iron-sulfur (Fe-S) centers, to quinones in the respiratory chain. The immediate electron acceptor for the enzyme in this species is believed to be ubiquinone. Couples the redox reaction to proton translocation (for every two electrons transferred, four hydrogen ions are translocated across the cytoplasmic membrane), and thus conserves the redox energy in a proton gradient. The protein is NADH-quinone oxidoreductase subunit I 1 of Symbiobacterium thermophilum (strain DSM 24528 / JCM 14929 / IAM 14863 / T).